Consider the following 242-residue polypeptide: Ras-like protein family member 11A (242 aa).

The tract at residues glutamate 17–leucine 241 is small GTPase-like. GTP contacts are provided by residues glycine 34–serine 41, aspartate 81–glycine 85, and asparagine 147–aspartate 150.

The protein belongs to the small GTPase superfamily. Ras family. As to quaternary structure, interacts with UBF/UBTF.

The protein resides in the nucleus. The protein localises to the nucleolus. It catalyses the reaction GTP + H2O = GDP + phosphate + H(+). Regulator of rDNA transcription. Acts in cooperation UBF/UBTF and positively regulates RNA polymerase I transcription. The chain is Ras-like protein family member 11A from Rattus norvegicus (Rat).